A 324-amino-acid chain; its full sequence is Endochitinase 1 (324 aa).

The first 22 residues, methionine 1 to alanine 22, serve as a signal peptide directing secretion. The Chitin-binding type-1 domain maps to glutamate 23–glycine 64. 7 disulfide bridges follow: cysteine 25–cysteine 40, cysteine 34–cysteine 46, cysteine 39–cysteine 53, cysteine 58–cysteine 62, cysteine 95–cysteine 158, cysteine 170–cysteine 178, and cysteine 277–cysteine 309. Glutamate 139 (proton donor) is an active-site residue. Residues glycine 318–methionine 324 constitute a propeptide, removed in mature form.

The protein belongs to the glycosyl hydrolase 19 family. Chitinase class I subfamily.

The catalysed reaction is Random endo-hydrolysis of N-acetyl-beta-D-glucosaminide (1-&gt;4)-beta-linkages in chitin and chitodextrins.. In terms of biological role, defense against chitin-containing fungal pathogens. The chain is Endochitinase 1 from Gossypium hirsutum (Upland cotton).